A 555-amino-acid polypeptide reads, in one-letter code: 2-succinyl-5-enolpyruvyl-6-hydroxy-3-cyclohexene-1-carboxylate synthase (555 aa).

It belongs to the TPP enzyme family. MenD subfamily. In terms of assembly, homodimer. Requires Mg(2+) as cofactor. The cofactor is Mn(2+). Thiamine diphosphate serves as cofactor.

It catalyses the reaction isochorismate + 2-oxoglutarate + H(+) = 5-enolpyruvoyl-6-hydroxy-2-succinyl-cyclohex-3-ene-1-carboxylate + CO2. The protein operates within quinol/quinone metabolism; 1,4-dihydroxy-2-naphthoate biosynthesis; 1,4-dihydroxy-2-naphthoate from chorismate: step 2/7. Its pathway is quinol/quinone metabolism; menaquinone biosynthesis. In terms of biological role, catalyzes the thiamine diphosphate-dependent decarboxylation of 2-oxoglutarate and the subsequent addition of the resulting succinic semialdehyde-thiamine pyrophosphate anion to isochorismate to yield 2-succinyl-5-enolpyruvyl-6-hydroxy-3-cyclohexene-1-carboxylate (SEPHCHC). This Bacteroides thetaiotaomicron (strain ATCC 29148 / DSM 2079 / JCM 5827 / CCUG 10774 / NCTC 10582 / VPI-5482 / E50) protein is 2-succinyl-5-enolpyruvyl-6-hydroxy-3-cyclohexene-1-carboxylate synthase.